The chain runs to 142 residues: Universal stress protein C (142 aa).

This sequence belongs to the universal stress protein A family.

It localises to the cytoplasm. Required for resistance to DNA-damaging agents. This Escherichia coli (strain K12) protein is Universal stress protein C (uspC).